An 840-amino-acid polypeptide reads, in one-letter code: Serotype-specific mannosyltransferase WbdA (840 aa).

The segment at 2 to 399 is alpha-(1-&gt;2)-mannosyltransferase; the sequence is HILIDVQGYQ…WANTAHLAIE (398 aa). An alpha-(1-&gt;3)-mannosyltransferase region spans residues 456 to 829; the sequence is KLLVDISVLA…WKQSAEFLLK (374 aa).

The protein belongs to the glycosyltransferase group 1 family. Glycosyltransferase 4 subfamily. Monomer. Interacts with the C-terminal region of WbdD. Interacts with WbdD via a surface-exposed alpha-helix in the C-terminal mannosyltransferase domain. However, the C-terminal domain is unable to interact with WbdD in the absence of its N-terminal partner.

It is found in the cell inner membrane. It carries out the reaction [alpha-D-Man-(1-&gt;3)-alpha-D-Man-(1-&gt;3)-alpha-D-Man-(1-&gt;2)-alpha-D-Man-(1-&gt;2)](n)-alpha-D-Man-(1-&gt;3)-alpha-D-Man-(1-&gt;3)-alpha-D-Man-(1-&gt;3)-alpha-D-GlcNAc-di-trans,octa-cis-undecaprenyl diphosphate + 2 GDP-alpha-D-mannose = alpha-D-Man-(1-&gt;2)-alpha-D-Man-(1-&gt;2)-[alpha-D-Man-(1-&gt;3)-alpha-D-Man-(1-&gt;3)-alpha-D-Man-(1-&gt;2)-alpha-D-Man-(1-&gt;2)](n)-alpha-D-Man-(1-&gt;3)-alpha-D-Man-(1-&gt;3)-alpha-D-Man-(1-&gt;3)-alpha-D-GlcNAc-di-trans,octa-cis-undecaprenyl diphosphate + 2 GDP + 2 H(+). The enzyme catalyses alpha-D-Man-(1-&gt;2)-alpha-D-Man-(1-&gt;2)-[alpha-D-Man-(1-&gt;3)-alpha-D-Man-(1-&gt;3)-alpha-D-Man-(1-&gt;2)-alpha-D-Man-(1-&gt;2)](n)-alpha-D-Man-(1-&gt;3)-alpha-D-Man-(1-&gt;3)-alpha-D-Man-(1-&gt;3)-alpha-D-GlcNAc-di-trans,octa-cis-undecaprenyl diphosphate + 2 GDP-alpha-D-mannose = [alpha-D-Man-(1-&gt;3)-alpha-D-Man-(1-&gt;3)-alpha-D-Man-(1-&gt;2)-alpha-D-Man-(1-&gt;2)](n+1)-alpha-D-Man-(1-&gt;3)-alpha-D-Man-(1-&gt;3)-alpha-D-Man-(1-&gt;3)-alpha-D-GlcNAc-di-trans,octa-cis-undecaprenyl diphosphate + 2 GDP + 2 H(+). The protein operates within bacterial outer membrane biogenesis; LPS O-antigen biosynthesis. Its activity is regulated as follows. The alpha-(1-&gt;2)-mannosyltransferase activity of the N-terminal domain is regulated by the activity of the C-terminal alpha-(1-&gt;3)-mannosyltransferase. The relative concentration of WbdA and WbdD is critical in determining the O polysaccharide (OPS) modal chain length. OPS chain length increases with increasing concentration of WbdA, but the maximum length does not increase beyond the wild-type modal length, despite substantial increases in WbdA concentration. In terms of biological role, mannosyltransferase involved in the biosynthesis of the repeat unit of the lipopolysaccharide (LPS) O-antigen region. Catalyzes the polymerization of a tetrasaccharide repeat unit containing two alpha-(1-&gt;3)- and two alpha-(1-&gt;2)-linked mannopyranose residues. Extension is terminated by the action of the chain terminator bifunctional methyltransferase/kinase WbdD. This chain is Serotype-specific mannosyltransferase WbdA, found in Escherichia coli.